The following is a 644-amino-acid chain: Protein lin-9 (644 aa).

The interval 1–77 (MSSAVRSPRK…GRDSPSVNSL (77 aa)) is disordered. A compositionally biased stretch (basic residues) spans 50–62 (SIKRTGSPKKSPA).

This sequence belongs to the lin-9 family. In terms of assembly, component of the DRM complex, at least composed of lin-9, lin-35, lin-37, lin-52, lin-53, lin-54- dpl-1 and efl-1. Interacts with zft-11; the interaction is required to suppress the activation of non-neuronal genes in neurons.

The protein localises to the nucleus. Its function is as follows. Synthetic multivulva class B (synMuvB) protein. SynMuvB proteins are required to repress the induction of vulval development by Ras signaling and probably act by forming the multiprotein DRM complex that represses transcription. Required for the development of sheath cells in the hermaphrodite gonad and for the development of the male spicule, rays and gonad. In association with the zinc finger protein ztf-11, negatively regulates the expression of non-neuronal genes during neurogenesis. The chain is Protein lin-9 from Caenorhabditis elegans.